A 157-amino-acid chain; its full sequence is MPRKGHIAKREPLADPVYGSTLANKFVNSMMWDGKKSTAQGIFYEAMKKLEAKGGGEEAIKLFKKAVENAKPLLEVKTRRVGGANYQVPVEVNADRRTSLAIRWLISYSRGRGEKGMIDKLANELLDAANGRGAAIKKKEDVHRMAEANKAFAHYRW.

It belongs to the universal ribosomal protein uS7 family. Part of the 30S ribosomal subunit. Contacts proteins S9 and S11.

In terms of biological role, one of the primary rRNA binding proteins, it binds directly to 16S rRNA where it nucleates assembly of the head domain of the 30S subunit. Is located at the subunit interface close to the decoding center, probably blocks exit of the E-site tRNA. The chain is Small ribosomal subunit protein uS7 from Koribacter versatilis (strain Ellin345).